Here is a 61-residue protein sequence, read N- to C-terminus: Probable tautomerase SMU_1087 (61 aa).

Catalysis depends on proline 2, which acts as the Proton acceptor; via imino nitrogen.

The protein belongs to the 4-oxalocrotonate tautomerase family.

The sequence is that of Probable tautomerase SMU_1087 from Streptococcus mutans serotype c (strain ATCC 700610 / UA159).